A 334-amino-acid chain; its full sequence is SH3 and cysteine-rich domain-containing protein 3 (334 aa).

Residues 1 to 26 form a disordered region; it reads MAQYDQLEDKDSLDIHDNPPAPENVV. The segment covering 7–17 has biased composition (basic and acidic residues); the sequence is LEDKDSLDIHD. The Phorbol-ester/DAG-type zinc-finger motif lies at 62–113; that stretch reads PHKFKDHYCKKPKFCDVCARMIVLNNKFALRCKNCKTNIHHSCQSYVQFQRC. A compositionally biased stretch (acidic residues) spans 178 to 190; sequence EEEAQQPKEDEEG. A disordered region spans residues 178-215; the sequence is EEEAQQPKEDEEGAEGKQDGDKKDKTATDDKNKKQQQT. Basic and acidic residues predominate over residues 191 to 210; it reads AEGKQDGDKKDKTATDDKNK. SH3 domains follow at residues 217–276 and 277–334; these read SQSH…RVRA and GERV…LHEL.

As to quaternary structure, component of a calcium channel complex with CACNA1S. In terms of tissue distribution, expressed in muscles at the muscle triad.

The protein localises to the cytoplasm. Its subcellular location is the cell membrane. It is found in the sarcolemma. It localises to the T-tubule. Required for normal excitation-contraction coupling in skeletal muscle and for normal muscle contraction in response to membrane depolarization. Required for normal Ca(2+) release from the sarcplasmic reticulum, which ultimately leads to muscle contraction. Probably functions via its effects on muscle calcium channels. Increases CACNA1S channel activity, in addition to its role in enhancing the expression of CACNA1S at the cell membrane. Has a redundant role in promoting the expression of the calcium channel CACNA1S at the cell membrane. The polypeptide is SH3 and cysteine-rich domain-containing protein 3 (Danio rerio (Zebrafish)).